The primary structure comprises 337 residues: Transaldolase (337 aa).

The Nuclear localization signal signature appears at 1–10 (MSGSPVKRQR). The residue at position 115 (Lys-115) is an N6-acetyllysine. Lys-142 functions as the Schiff-base intermediate with substrate in the catalytic mechanism. Lys-219 is subject to N6-acetyllysine. 2 positions are modified to phosphoserine: Ser-237 and Ser-256. Lys-269, Lys-286, and Lys-321 each carry N6-acetyllysine.

It belongs to the transaldolase family. Type 1 subfamily. Homodimer. Interacts with KPNA1 and KPNA4.

Its subcellular location is the nucleus. The protein localises to the cytoplasm. It catalyses the reaction D-sedoheptulose 7-phosphate + D-glyceraldehyde 3-phosphate = D-erythrose 4-phosphate + beta-D-fructose 6-phosphate. The protein operates within carbohydrate degradation; pentose phosphate pathway; D-glyceraldehyde 3-phosphate and beta-D-fructose 6-phosphate from D-ribose 5-phosphate and D-xylulose 5-phosphate (non-oxidative stage): step 2/3. Its function is as follows. Catalyzes the rate-limiting step of the non-oxidative phase in the pentose phosphate pathway. Catalyzes the reversible conversion of sedheptulose-7-phosphate and D-glyceraldehyde 3-phosphate into erythrose-4-phosphate and beta-D-fructose 6-phosphate. The polypeptide is Transaldolase (Taldo1) (Rattus norvegicus (Rat)).